An 86-amino-acid chain; its full sequence is Large ribosomal subunit protein bL27 (86 aa).

Residues 1 to 26 are disordered; sequence MATKKAGGSSRNGRDSAGRRLGIKKS.

Belongs to the bacterial ribosomal protein bL27 family.

In Rickettsia typhi (strain ATCC VR-144 / Wilmington), this protein is Large ribosomal subunit protein bL27.